A 180-amino-acid chain; its full sequence is Ribosome-recycling factor (180 aa).

This sequence belongs to the RRF family.

The protein localises to the cytoplasm. Its function is as follows. Responsible for the release of ribosomes from messenger RNA at the termination of protein biosynthesis. May increase the efficiency of translation by recycling ribosomes from one round of translation to another. The protein is Ribosome-recycling factor of Chlamydia caviae (strain ATCC VR-813 / DSM 19441 / 03DC25 / GPIC) (Chlamydophila caviae).